The following is a 245-amino-acid chain: 1-(5-phosphoribosyl)-5-[(5-phosphoribosylamino)methylideneamino] imidazole-4-carboxamide isomerase (245 aa).

D7 functions as the Proton acceptor in the catalytic mechanism. D129 functions as the Proton donor in the catalytic mechanism.

Belongs to the HisA/HisF family.

The protein resides in the cytoplasm. It catalyses the reaction 1-(5-phospho-beta-D-ribosyl)-5-[(5-phospho-beta-D-ribosylamino)methylideneamino]imidazole-4-carboxamide = 5-[(5-phospho-1-deoxy-D-ribulos-1-ylimino)methylamino]-1-(5-phospho-beta-D-ribosyl)imidazole-4-carboxamide. It participates in amino-acid biosynthesis; L-histidine biosynthesis; L-histidine from 5-phospho-alpha-D-ribose 1-diphosphate: step 4/9. In Shigella boydii serotype 4 (strain Sb227), this protein is 1-(5-phosphoribosyl)-5-[(5-phosphoribosylamino)methylideneamino] imidazole-4-carboxamide isomerase.